The sequence spans 281 residues: NADPH-dependent 7-cyano-7-deazaguanine reductase (281 aa).

81 to 83 (VES) is a substrate binding site. NADPH is bound at residue 83–84 (SK). Catalysis depends on Cys188, which acts as the Thioimide intermediate. Asp195 acts as the Proton donor in catalysis. Position 227-228 (227-228 (HE)) interacts with substrate. Residue 256–257 (RG) participates in NADPH binding.

This sequence belongs to the GTP cyclohydrolase I family. QueF type 2 subfamily. In terms of assembly, homodimer.

It localises to the cytoplasm. The catalysed reaction is 7-aminomethyl-7-carbaguanine + 2 NADP(+) = 7-cyano-7-deazaguanine + 2 NADPH + 3 H(+). It functions in the pathway tRNA modification; tRNA-queuosine biosynthesis. In terms of biological role, catalyzes the NADPH-dependent reduction of 7-cyano-7-deazaguanine (preQ0) to 7-aminomethyl-7-deazaguanine (preQ1). The protein is NADPH-dependent 7-cyano-7-deazaguanine reductase of Acidovorax ebreus (strain TPSY) (Diaphorobacter sp. (strain TPSY)).